The primary structure comprises 513 residues: tRNA-2-methylthio-N(6)-dimethylallyladenosine synthase (513 aa).

The MTTase N-terminal domain maps to 67–185 (KTFLIKTYGC…LPEILEEAYL (119 aa)). [4Fe-4S] cluster-binding residues include Cys-76, Cys-112, Cys-146, Cys-222, Cys-226, and Cys-229. Positions 208–438 (REGNIKAWVN…NKKVACYSER (231 aa)) constitute a Radical SAM core domain. A TRAM domain is found at 441-504 (QQYEGQTVQV…QFSLNGTFIS (64 aa)).

This sequence belongs to the methylthiotransferase family. MiaB subfamily. As to quaternary structure, monomer. Requires [4Fe-4S] cluster as cofactor.

It is found in the cytoplasm. The enzyme catalyses N(6)-dimethylallyladenosine(37) in tRNA + (sulfur carrier)-SH + AH2 + 2 S-adenosyl-L-methionine = 2-methylsulfanyl-N(6)-dimethylallyladenosine(37) in tRNA + (sulfur carrier)-H + 5'-deoxyadenosine + L-methionine + A + S-adenosyl-L-homocysteine + 2 H(+). Functionally, catalyzes the methylthiolation of N6-(dimethylallyl)adenosine (i(6)A), leading to the formation of 2-methylthio-N6-(dimethylallyl)adenosine (ms(2)i(6)A) at position 37 in tRNAs that read codons beginning with uridine. The protein is tRNA-2-methylthio-N(6)-dimethylallyladenosine synthase of Staphylococcus saprophyticus subsp. saprophyticus (strain ATCC 15305 / DSM 20229 / NCIMB 8711 / NCTC 7292 / S-41).